The sequence spans 97 residues: Co-chaperonin GroES (97 aa).

It belongs to the GroES chaperonin family. As to quaternary structure, heptamer of 7 subunits arranged in a ring. Interacts with the chaperonin GroEL.

Its subcellular location is the cytoplasm. Its function is as follows. Together with the chaperonin GroEL, plays an essential role in assisting protein folding. The GroEL-GroES system forms a nano-cage that allows encapsulation of the non-native substrate proteins and provides a physical environment optimized to promote and accelerate protein folding. GroES binds to the apical surface of the GroEL ring, thereby capping the opening of the GroEL channel. This is Co-chaperonin GroES from Pseudarthrobacter chlorophenolicus (strain ATCC 700700 / DSM 12829 / CIP 107037 / JCM 12360 / KCTC 9906 / NCIMB 13794 / A6) (Arthrobacter chlorophenolicus).